The following is a 485-amino-acid chain: uncharacterized protein (485 aa).

11 consecutive transmembrane segments (helical) span residues 79-99 (LVTL…LIFA), 117-137 (VFAL…FLVF), 139-159 (FFSG…LADL), 170-190 (VIYF…SGFI), 199-219 (WEFW…FLLL), 275-295 (ILIC…LVLI), 313-333 (GLMY…AMPI), 355-375 (LPMG…FGWT), 380-400 (IFWF…IMTS), 421-441 (GVKI…ESLF), and 448-468 (WGCT…PILF).

The protein belongs to the major facilitator superfamily. CAR1 family.

Its subcellular location is the membrane. This is an uncharacterized protein from Schizosaccharomyces pombe (strain 972 / ATCC 24843) (Fission yeast).